Here is a 340-residue protein sequence, read N- to C-terminus: DNA-directed RNA polymerase subunit alpha (340 aa).

The interval 1–236 is alpha N-terminal domain (alpha-NTD); sequence MLSLSKNWNT…EQLQLFIAFE (236 aa). The interval 251-340 is alpha C-terminal domain (alpha-CTD); the sequence is FSPYLLKRVD…LSKRYEDSYN (90 aa).

This sequence belongs to the RNA polymerase alpha chain family. In terms of assembly, homodimer. The RNAP catalytic core consists of 2 alpha, 1 beta, 1 beta' and 1 omega subunit. When a sigma factor is associated with the core the holoenzyme is formed, which can initiate transcription.

The catalysed reaction is RNA(n) + a ribonucleoside 5'-triphosphate = RNA(n+1) + diphosphate. In terms of biological role, DNA-dependent RNA polymerase catalyzes the transcription of DNA into RNA using the four ribonucleoside triphosphates as substrates. The protein is DNA-directed RNA polymerase subunit alpha of Rickettsia typhi (strain ATCC VR-144 / Wilmington).